A 330-amino-acid chain; its full sequence is DNA-directed RNA polymerase subunit alpha (330 aa).

The tract at residues 1-235 is alpha N-terminal domain (alpha-NTD); the sequence is MQGSVTEFLK…EQLEAFVDLR (235 aa). Residues 249–330 are alpha C-terminal domain (alpha-CTD); sequence FDPILLRPVD…WPPASIADNE (82 aa).

It belongs to the RNA polymerase alpha chain family. In terms of assembly, homodimer. The RNAP catalytic core consists of 2 alpha, 1 beta, 1 beta' and 1 omega subunit. When a sigma factor is associated with the core the holoenzyme is formed, which can initiate transcription.

The catalysed reaction is RNA(n) + a ribonucleoside 5'-triphosphate = RNA(n+1) + diphosphate. DNA-dependent RNA polymerase catalyzes the transcription of DNA into RNA using the four ribonucleoside triphosphates as substrates. The polypeptide is DNA-directed RNA polymerase subunit alpha (Yersinia enterocolitica serotype O:8 / biotype 1B (strain NCTC 13174 / 8081)).